Here is a 985-residue protein sequence, read N- to C-terminus: UPF0182 protein Cgl0786/cg0896 (985 aa).

7 helical membrane-spanning segments follow: residues 19 to 39, 63 to 83, 115 to 135, 176 to 196, 215 to 235, 262 to 282, and 290 to 310; these read VTWIFAIIALVILIAPMSVGF, IVLFVIFALIAGFVTWLAGYF, VMVIIPIFVALLAGLIGQRSW, SMMLIVAFLIALVGHYLMGGI, TQLAVTAGLWMLVKVAGYWLD, KIILLVIALFVAIAFFSAIFL, and LAVVLMLLSSVIIGAAWPLML. Residues 904–944 are disordered; the sequence is KEAQDIEEVDGTATTPSTDETDTDTDQPATETPTAPVSEAE. A compositionally biased stretch (low complexity) spans 929 to 939; that stretch reads DQPATETPTAP.

This sequence belongs to the UPF0182 family.

The protein localises to the cell membrane. This is UPF0182 protein Cgl0786/cg0896 from Corynebacterium glutamicum (strain ATCC 13032 / DSM 20300 / JCM 1318 / BCRC 11384 / CCUG 27702 / LMG 3730 / NBRC 12168 / NCIMB 10025 / NRRL B-2784 / 534).